We begin with the raw amino-acid sequence, 267 residues long: Large ribosomal subunit protein uL2c (267 aa).

Belongs to the universal ribosomal protein uL2 family. In terms of assembly, part of the 50S ribosomal subunit.

The protein localises to the plastid. The protein resides in the apicoplast. The chain is Large ribosomal subunit protein uL2c (rpl2) from Toxoplasma gondii.